The sequence spans 530 residues: UDP-glucuronosyltransferase 2B7 (530 aa).

The signal sequence occupies residues 1–17 (MPQKWISALLLLQISFC). Asparagine 316 carries an N-linked (GlcNAc...) asparagine glycan. UDP-alpha-D-glucuronate-binding positions include 374-380 (THGGANG) and glutamate 400. A helical membrane pass occupies residues 496 to 516 (IGFLLACVLAIVLLAVKCCLF).

The protein belongs to the UDP-glycosyltransferase family.

The protein localises to the endoplasmic reticulum membrane. The enzyme catalyses glucuronate acceptor + UDP-alpha-D-glucuronate = acceptor beta-D-glucuronoside + UDP + H(+). The catalysed reaction is 17alpha-estradiol + UDP-alpha-D-glucuronate = 17alpha-estradiol 17-O-(beta-D-glucuronate) + UDP + H(+). It catalyses the reaction 17beta-estradiol + UDP-alpha-D-glucuronate = 17beta-estradiol 17-O-(beta-D-glucuronate) + UDP + H(+). It carries out the reaction 2-hydroxy-17beta-estradiol + UDP-alpha-D-glucuronate = 2-hydroxy-17beta-estradiol 3-O-(beta-D-glucuronate) + UDP + H(+). The enzyme catalyses 4-hydroxy-17beta-estradiol + UDP-alpha-D-glucuronate = 17beta-estradiol 4-O-(beta-D-glucuronate) + UDP + H(+). The catalysed reaction is 4-hydroxyestrone + UDP-alpha-D-glucuronate = estrone 4-O-(beta-D-glucuronate) + UDP + H(+). It catalyses the reaction 16alpha-hydroxyestrone + UDP-alpha-D-glucuronate = 16alpha-hydroxyestrone 16-O-(beta-D-glucuronate) + UDP + H(+). It carries out the reaction 16alpha,17beta-estriol + UDP-alpha-D-glucuronate = 16alpha,17beta-estriol 16-O-(beta-D-glucuronate) + UDP + H(+). The enzyme catalyses 16beta,17beta-estriol + UDP-alpha-D-glucuronate = 16beta,17beta-estriol 16-O-(beta-D-glucuronate) + UDP + H(+). The catalysed reaction is 16alpha,17alpha-estriol + UDP-alpha-D-glucuronate = 16alpha,17alpha-estriol 16-O-(beta-D-glucuronate) + UDP + H(+). It catalyses the reaction 16alpha,17alpha-estriol + UDP-alpha-D-glucuronate = 16alpha,17alpha-estriol 17-O-(beta-D-glucuronate) + UDP + H(+). It carries out the reaction epitestosterone + UDP-alpha-D-glucuronate = epitestosterone 17-O-(beta-D-glucuronate) + UDP + H(+). The enzyme catalyses hyodeoxycholate + UDP-alpha-D-glucuronate = hyodeoxycholate 6-O-(beta-D-glucuronate) + UDP + H(+). The catalysed reaction is hyocholate + UDP-alpha-D-glucuronate = hyocholate 6-O-(beta-D-glucuronate) + UDP + H(+). It catalyses the reaction all-trans-retinoate + UDP-alpha-D-glucuronate = all-trans-retinoyl-1-O-(beta-D-glucuronate) + UDP. It carries out the reaction all-trans-4-hydroxyretinoate + UDP-alpha-D-glucuronate = all-trans-4-hydroxy-4-O-(beta-D-glucuronide)-retinoate + UDP + H(+). The enzyme catalyses (E)-ferulate + UDP-alpha-D-glucuronate = (E)-ferulic acid beta-D-glucuronate ester + UDP. The catalysed reaction is 8-iso-prostaglandin F2alpha + UDP-alpha-D-glucuronate = 8-iso-prostaglandin F2alpha-glucuronide + UDP + H(+). It catalyses the reaction 5-epi-5-F2t-IsoP + UDP-alpha-D-glucuronate = 5-epi-5-F2t-IsoP-glucuronide + UDP + H(+). It carries out the reaction (5Z,8Z,11Z,14Z)-eicosatetraenoate + UDP-alpha-D-glucuronate = O-[(5Z),(8Z),(11Z),(14Z)-eicosatetraenoyl]-beta-D-glucuronate + UDP. The enzyme catalyses 15-hydroxy-(5Z,8Z,11Z,13E)-eicosatetraenoate + UDP-alpha-D-glucuronate = 15-O-(beta-D-glucuronosyl)-(5Z,8Z,11Z,14Z)-eicosatetraenoate + UDP + H(+). The catalysed reaction is 20-hydroxy-(5Z,8Z,11Z,14Z)-eicosatetraenoate + UDP-alpha-D-glucuronate = 20-O-(beta-D-glucuronosyl)-(5Z,8Z,11Z,14Z)-eicosatetraenoate + UDP + H(+). It catalyses the reaction (E)-ferulate + UDP-alpha-D-glucuronate = (E)-4-O-(beta-D-glucuronosyl)-ferulate + UDP + H(+). It carries out the reaction prostaglandin B1 + UDP-alpha-D-glucuronate = 15-O-(beta-D-glucuronosyl)-prostaglandin B1 + UDP + H(+). The enzyme catalyses mycophenolate + UDP-alpha-D-glucuronate = mycophenolic acid O-acyl-beta-D-glucuronide + UDP. The catalysed reaction is losartan + UDP-alpha-D-glucuronate = losartan-2-N-beta-D-glucuronide + UDP. It catalyses the reaction candesartan + UDP-alpha-D-glucuronate = candesartan O-beta-D-glucuronoside + UDP. It carries out the reaction candesartan + UDP-alpha-D-glucuronate = candesartan-2-N-beta-D-glucuronide + UDP. The enzyme catalyses zolasartan + UDP-alpha-D-glucuronate = zolarsartan O-beta-D-glucuronoside + UDP. Functionally, UDP-glucuronosyltransferase (UGT) that catalyzes phase II biotransformation reactions in which lipophilic substrates are conjugated with glucuronic acid to increase the metabolite's water solubility, thereby facilitating excretion into either the urine or bile. Essential for the elimination and detoxification of drugs, xenobiotics and endogenous compounds. Catalyzes the glucuronidation of endogenous steroid hormones such as androgens (epitestosterone, androsterone) and estrogens (estradiol, epiestradiol, estriol, catechol estrogens). Also regulates the levels of retinoic acid, a major metabolite of vitamin A involved in apoptosis, cellular growth and differentiation, and embryonic development. Contributes to bile acid (BA) detoxification by catalyzing the glucuronidation of BA substrates, which are natural detergents for dietary lipids absorption. Involved in the glucuronidation of arachidonic acid (AA) and AA-derived eicosanoids including 15-HETE, 20-HETE, PGE2, PGB1 and F2-isoprostanes (8-iso-PGF2alpha and 5-epi-5-F2t-IsoP). Involved in the glucuronidation of the phytochemical ferulic acid at the phenolic or the carboxylic acid group. Involved in the glucuronidation of the AGTR1 angiotensin receptor antagonist losartan, caderastan and zolarsatan, drugs which can inhibit the effect of angiotensin II. Also metabolizes mycophenolate, an immunosuppressive agent. This chain is UDP-glucuronosyltransferase 2B7, found in Rattus norvegicus (Rat).